A 454-amino-acid chain; its full sequence is OTU domain-containing protein 1 (454 aa).

Disordered stretches follow at residues 36-64 (QSAS…REAA) and 116-257 (LPPP…SRAD). Low complexity predominate over residues 52–64 (RPPAAATEPREAA). Over residues 116–125 (LPPPSAPSPP) the composition is skewed to pro residues. Composition is skewed to basic and acidic residues over residues 151–164 (DAPD…EHRQ), 193–210 (GEER…RASG), and 219–229 (ALRRQDPEAEA). In terms of domain architecture, OTU spans 282-411 (KYRFHIIPDG…NGHYDAVFDH (130 aa)). The interval 287-293 (IIPDGNC) is cys-loop. Asp-290 is a catalytic residue. Cys-293 functions as the Nucleophile in the catalytic mechanism. The interval 342-352 (AAQDGAWAGYP) is his-loop. Residues 399–404 (WLSNGH) form a variable-loop region. Residue His-404 is part of the active site. The UIM domain occupies 430–449 (KRDEELAKSMAISLSKMYIE).

The catalysed reaction is Thiol-dependent hydrolysis of ester, thioester, amide, peptide and isopeptide bonds formed by the C-terminal Gly of ubiquitin (a 76-residue protein attached to proteins as an intracellular targeting signal).. Functionally, deubiquitinating enzyme that specifically hydrolyzes 'Lys-63'-linked polyubiquitin to monoubiquitin. Required for the stability and translation of a subset mRNAs with a high abundance of rare codons by mediating deubiquitination of 40S ribosomal protein RPS10/eS10, thereby antagonizing ZNF598-mediated 40S ubiquitination. The abundance of rare codons in mRNAs can limit the translation rate and can lead to ribosome collisions that trigger activation of ribosome quality control (RQC) pathway by ZNF598. OTUD1-mediated deubiquitination prevents activation of the RQC and subsequent dissociation of ribosomes and stimulates formation of polysomes and translation. In Mus musculus (Mouse), this protein is OTU domain-containing protein 1 (Otud1).